The following is a 426-amino-acid chain: Protein trichome birefringence-like 19 (426 aa).

The helical; Signal-anchor for type II membrane protein transmembrane segment at 15–35 (LLIAVTIATSLLTIIPLLYPL) threads the bilayer. A GDS motif motif is present at residues 142-144 (GDS). The DCXHWCLPGXXDXWN motif signature appears at 388–402 (DCVHWCLPGPIDNLN).

The protein belongs to the PC-esterase family. TBL subfamily.

The protein resides in the membrane. May act as a bridging protein that binds pectin and other cell wall polysaccharides. Probably involved in maintaining esterification of pectins. May be involved in the specific O-acetylation of cell wall polymers. This chain is Protein trichome birefringence-like 19 (TBL19), found in Arabidopsis thaliana (Mouse-ear cress).